The following is a 318-amino-acid chain: uncharacterized protein (318 aa).

This is an uncharacterized protein from Orgyia pseudotsugata multicapsid polyhedrosis virus (OpMNPV).